The sequence spans 433 residues: Xylose isomerase (433 aa).

Active-site residues include H99 and D102. Mg(2+) contacts are provided by E230, E266, H269, D294, D305, D307, and D337.

Belongs to the xylose isomerase family. In terms of assembly, homotetramer. The cofactor is Mg(2+).

It is found in the cytoplasm. The catalysed reaction is alpha-D-xylose = alpha-D-xylulofuranose. In Cereibacter sphaeroides (strain ATCC 17029 / ATH 2.4.9) (Rhodobacter sphaeroides), this protein is Xylose isomerase.